A 526-amino-acid chain; its full sequence is Importin subunit alpha-1a (526 aa).

The IBB domain maps to 1-58 (MSLRPSERVEVRRNRYKVAVDAEEGRRRREDNMVEIRKSRREESLLKKRREGLQAQAP). ARM repeat units follow at residues 105–145 (SPPI…NIAS), 148–187 (SENTKVVIDHGAVPIFVKLLGSSSDDVREQAVWALGNVAG), 190–230 (PKCR…NFCR), 232–271 (KPQPSFEQTRPALPALARLIHSNDEEVLTDACWALSYLSD), 274–313 (NDKIQAVIEAGVCPRLVELLLHPSPSVLIPALRTVGNIVT), 316–356 (DAQT…NITA), 359–398 (KDQIQAVINAGIIGPLVNLLQTAEFDIKKEAAWAISNATS), and 402–441 (HDQIKYLVSEGCIKPLCDLLICPDIRIVTVCLEGLENILK).

It belongs to the importin alpha family. Forms a complex with importin subunit beta-1. The whole complex, most stable and composed of importin alpha, importin beta and NLS substrate, is referred to as PTAC or pore targeting complex. Interacts with mungbean yellow mosaic virus capsid protein. Highly expressed in callus, followed by root and etiolated leaf. Low expression in green leaf.

Its subcellular location is the cytoplasm. The protein resides in the perinuclear region. In terms of biological role, functions in nuclear protein import. Binds specifically and directly to substrates containing either a simple or bipartite NLS motif. Promotes docking of import substrates to the nuclear envelope. The protein is Importin subunit alpha-1a of Oryza sativa subsp. japonica (Rice).